Reading from the N-terminus, the 67-residue chain is Medusin-H1 (67 aa).

An N-terminal signal peptide occupies residues 1 to 22 (MDFLKKSLFLVLFLGFFSLSIC). Residues 23-48 (EEEKRETEEKENEQEDDREERREEKR) constitute a propeptide that is removed on maturation. The segment at 24–46 (EEKRETEEKENEQEDDREERREE) is disordered. Over residues 31–40 (EKENEQEDDR) the composition is skewed to acidic residues. The residue at position 66 (L66) is a Leucine amide.

This sequence belongs to the frog skin active peptide (FSAP) family. Medusin subfamily. In terms of tissue distribution, expressed by the skin glands.

The protein localises to the secreted. Antimicrobial peptide with activity against Gram-positive bacteria (S.aureus, MIC=32 mg/L) and fungi (C.albicans, MIC=128 mg/L). Shows weak hemolytic activity. This Pithecopus hypochondrialis (Orange-legged leaf frog) protein is Medusin-H1.